The chain runs to 336 residues: tRNA N6-adenosine threonylcarbamoyltransferase (336 aa).

Positions 111 and 115 each coordinate Fe cation. Substrate-binding positions include 134-138 (LVSGG), Asp-167, Gly-180, and Asn-271. A Fe cation-binding site is contributed by Asp-299.

The protein belongs to the KAE1 / TsaD family. It depends on Fe(2+) as a cofactor.

Its subcellular location is the cytoplasm. It catalyses the reaction L-threonylcarbamoyladenylate + adenosine(37) in tRNA = N(6)-L-threonylcarbamoyladenosine(37) in tRNA + AMP + H(+). In terms of biological role, required for the formation of a threonylcarbamoyl group on adenosine at position 37 (t(6)A37) in tRNAs that read codons beginning with adenine. Is involved in the transfer of the threonylcarbamoyl moiety of threonylcarbamoyl-AMP (TC-AMP) to the N6 group of A37, together with TsaE and TsaB. TsaD likely plays a direct catalytic role in this reaction. The polypeptide is tRNA N6-adenosine threonylcarbamoyltransferase (Thioalkalivibrio sulfidiphilus (strain HL-EbGR7)).